We begin with the raw amino-acid sequence, 243 residues long: MLTFLIPTAKEMTIPKESHPHLLPQDSQAILKIMAAMTTEDLAKAYRIKEEAAKKEQQRWQDMASQKSLAYPAYQLFNGLMYRHIKRDKLTTQEQAYLTQQVYITSSFYGIIPANHPIAEHRHDFHTRIKIEGQSLKSYWRPCYNQFAKEHPQVISLLSSEFDDVFSKDCKQLWISPKFMAEKEGQFKTHSTISKKARGAFLTACMENNCQTVDSLKSLVFAGFYYHPDLSTDHEFVYIKKEA.

It belongs to the UPF0246 family.

The chain is UPF0246 protein SpyM3_1790 from Streptococcus pyogenes serotype M3 (strain ATCC BAA-595 / MGAS315).